The primary structure comprises 416 residues: NADH-quinone oxidoreductase subunit D (416 aa).

The protein belongs to the complex I 49 kDa subunit family. As to quaternary structure, NDH-1 is composed of 14 different subunits. Subunits NuoB, C, D, E, F, and G constitute the peripheral sector of the complex.

Its subcellular location is the cell inner membrane. The enzyme catalyses a quinone + NADH + 5 H(+)(in) = a quinol + NAD(+) + 4 H(+)(out). In terms of biological role, NDH-1 shuttles electrons from NADH, via FMN and iron-sulfur (Fe-S) centers, to quinones in the respiratory chain. The immediate electron acceptor for the enzyme in this species is believed to be ubiquinone. Couples the redox reaction to proton translocation (for every two electrons transferred, four hydrogen ions are translocated across the cytoplasmic membrane), and thus conserves the redox energy in a proton gradient. The chain is NADH-quinone oxidoreductase subunit D from Rhodopseudomonas palustris (strain BisB5).